The primary structure comprises 451 residues: UPF0210 protein NMCC_1554 (451 aa).

Belongs to the UPF0210 family. In terms of assembly, homodimer.

This chain is UPF0210 protein NMCC_1554, found in Neisseria meningitidis serogroup C (strain 053442).